We begin with the raw amino-acid sequence, 405 residues long: Putative phosphate permease PYRAB14010 (405 aa).

A run of 11 helical transmembrane segments spans residues 3–23 (MDPW…AIGA), 44–64 (AVLI…KTVT), 82–102 (VLVY…VIAT), 114–134 (IIGG…VNWG), 138–158 (SVVL…FFIF), 181–201 (VWIG…VLHG), 207–227 (GVLK…SMIL), 264–284 (VANA…GMAG), 287–307 (VPVP…GVAT), 329–349 (FTID…GMPI), and 384–404 (FVTV…LWIV).

It belongs to the inorganic phosphate transporter (PiT) (TC 2.A.20) family.

It localises to the cell membrane. In terms of biological role, potential transporter for phosphate. This Pyrococcus abyssi (strain GE5 / Orsay) protein is Putative phosphate permease PYRAB14010.